Reading from the N-terminus, the 134-residue chain is Submaxillary gland androgen-regulated protein 3A (134 aa).

Positions 1 to 22 are cleaved as a signal peptide; sequence MKSLTWILGLWALAACFTPGES. The tract at residues 19-134 is disordered; it reads PGESQRGPRG…TDPALPTPAP (116 aa). 3 stretches are compositionally biased toward pro residues: residues 28–43, 50–85, and 94–119; these read GPYPPGPLAPPPPPCF, VPPPHPPPYGPGRFPPPLSPPYGPGRIPPSPPPPYG, and LPPPYGPGYPQPPSQPRPYPPGPPFF.

It belongs to the PROL1/PROL3 family.

The protein resides in the secreted. In terms of biological role, may play a role in protection or detoxification. The polypeptide is Submaxillary gland androgen-regulated protein 3A (SMR3A) (Homo sapiens (Human)).